A 596-amino-acid polypeptide reads, in one-letter code: Elongation factor 4 (596 aa).

A tr-type G domain is found at 2–184; that stretch reads KHIRNFSIIA…TIVAQIPPPE (183 aa). GTP contacts are provided by residues 14–19 and 131–134; these read DHGKST and NKID.

This sequence belongs to the TRAFAC class translation factor GTPase superfamily. Classic translation factor GTPase family. LepA subfamily.

It localises to the cell inner membrane. The enzyme catalyses GTP + H2O = GDP + phosphate + H(+). Required for accurate and efficient protein synthesis under certain stress conditions. May act as a fidelity factor of the translation reaction, by catalyzing a one-codon backward translocation of tRNAs on improperly translocated ribosomes. Back-translocation proceeds from a post-translocation (POST) complex to a pre-translocation (PRE) complex, thus giving elongation factor G a second chance to translocate the tRNAs correctly. Binds to ribosomes in a GTP-dependent manner. The chain is Elongation factor 4 from Shewanella loihica (strain ATCC BAA-1088 / PV-4).